Here is a 249-residue protein sequence, read N- to C-terminus: Mannose-binding protein A (249 aa).

The first 20 residues, 1–20, serve as a signal peptide directing secretion; it reads MLLFSSLPVLLLCVVTASYS. Positions 41–102 are disordered; that stretch reads VTNGTPGRDG…KGDPGDTSGV (62 aa). Over residues 48-60 the composition is skewed to basic and acidic residues; the sequence is RDGRDGPKGEKGE. Pro-54 is modified (4-hydroxyproline). 5-hydroxylysine is present on residues Lys-55 and Lys-58. 2 O-linked (Gal...) hydroxylysine glycosylation sites follow: Lys-55 and Lys-58. A 4-hydroxyproline mark is found at Pro-61, Pro-72, Pro-78, and Pro-89. The region spanning 64–98 is the Collagen-like domain; the sequence is GFRGSQGPPGKMGPPGNIGETGPLGPKGQKGDPGD. 5-hydroxylysine occurs at positions 90 and 93. 2 O-linked (Gal...) hydroxylysine glycosylation sites follow: Lys-90 and Lys-93. Positions 135-246 constitute a C-type lectin domain; sequence SRKKLYVTNG…CSSSFLAVCE (112 aa). 2 cysteine pairs are disulfide-bonded: Cys-156-Cys-245 and Cys-223-Cys-237. Ca(2+) contacts are provided by Asp-189, Glu-193, Glu-213, Asn-215, Asp-216, Glu-221, Asp-222, Asn-233, and Asp-234. Positions 213 to 221 are calcium-dependent carbohydrate binding; sequence EPNDHGSGE.

As to quaternary structure, interacts with MASP1 and MASP2. Forms oligomeric complexes of 3, 4, 5 or, predominantly, 6 homotrimers. The homotrimers appear as globular heads that are connected to a central hub by thin stalks. Post-translationally, hydroxylated on lysine and proline residues within the collagen-like domain. O-glycosylated. O-linked glycans on hydroxylysine residues consist of Glc-Gal disaccharides bound to the oxygen atom of post-translationally added hydroxyl groups. Detected in blood serum (at protein level). Expressed in liver. Weakly expressed in lung, testis and brain. Not detected in bone marrow and heart.

The protein localises to the secreted. Calcium-dependent lectin. Plays a role in the innate immune response by binding mannose, fucose and N-acetylglucosamine on bacteria, including strains of A.suis, H.parasuis and A.pleuropneumoniae, and activates the lectin complement pathway. According to some authors, it only binds mannose. This is Mannose-binding protein A from Sus scrofa (Pig).